Consider the following 823-residue polypeptide: Putative ankyrin repeat domain-containing protein 20A3 (823 aa).

ANK repeat units lie at residues 66–95 (QHRT…QIDV), 99–128 (ENRT…NPNL), 132–161 (YGNT…HIEA), 165–194 (DNNT…SSHA), and 198–227 (LRRS…DVFA). Disordered stretches follow at residues 301–343 (VPEK…EVED) and 355–402 (VQTL…LSEN). A compositionally biased stretch (basic and acidic residues) spans 372 to 384 (QERHERSEKKQPQ). Coiled coils occupy residues 431–480 (KKLK…KQLE), 571–724 (AFRY…NNST), and 776–805 (LVLE…EKTE).

This Homo sapiens (Human) protein is Putative ankyrin repeat domain-containing protein 20A3.